The sequence spans 601 residues: Probable HECT-type ubiquitin ligase-interacting protein creD (601 aa).

Disordered stretches follow at residues 374 to 397 (EVDP…GTLS) and 454 to 496 (VSTD…GMAT). Low complexity predominate over residues 455–473 (STDSFGPSSGSNSQSPASP). The segment covering 475–489 (LSRRPSDEGYHDHDY) has biased composition (basic and acidic residues).

Belongs to the arrestin family. Interacts with hulA.

In terms of biological role, component of the regulatory network controlling carbon source utilization through ubiquitination and deubiquitination involving creA, creB, creC, creD and acrB. May be involved in signaling by recognizing appropriately phosphorylated substrates via its arrestin domains and then recruit a HECT-type ubiquitin ligase such as hulA, leading to ubiquitination of the substrate, providing a link between ubiquitination and phosphorylation in protein regulation and stability. The protein is Probable HECT-type ubiquitin ligase-interacting protein creD (creD) of Aspergillus fumigatus (strain CBS 144.89 / FGSC A1163 / CEA10) (Neosartorya fumigata).